The following is a 321-amino-acid chain: Nucleus-vacuole junction protein 1 (321 aa).

An N-terminal signal peptide occupies residues 1–22 (MTRPPLVRGIFSLGLSVAVLKG). The tract at residues 73–125 (ELSWRKVFNFISRQSSELDTRIYVLILLLSFLLPIAWTVLDGDRETTLEDKDN) is TSC13-binding. A helical membrane pass occupies residues 94 to 114 (IYVLILLLSFLLPIAWTVLDG). The segment at 139–195 (KHYNDGERAVLQFGKNRSEPIILSYKDMNVLEGEHEFTSKEEHSNSHLTSKSENALN) is OSH1-binding. A phosphoserine mark is found at S156 and S199. The disordered stretch occupies residues 211 to 275 (LEEDKNEPNG…SLKSSTSFPI (65 aa)). Residues 233-321 (DCSSSSEVES…EQAYSQPFRY (89 aa)) are VAC8-binding. The segment covering 242-262 (SQSKCRKESTAEPDSLSRDTR) has biased composition (basic and acidic residues). Positions 263–272 (TTSSLKSSTS) are enriched in low complexity. 2 positions are modified to phosphoserine: S285 and S298. A disordered region spans residues 299–321 (PTKSSNLDAQVNTEQAYSQPFRY).

As to quaternary structure, interacts with OSH1, TSC13 and VAC8.

The protein resides in the nucleus outer membrane. Functionally, involved in the formation of nucleus-vacuole junctions (NVJs) during piecemeal microautophagy of the nucleus (PMN). NVJs are interorganelle interfaces mediated by NVJ1 in the nuclear envelope and VAC8 on the vacuole membrane. Together, NVJ1 and VAC8 form Velcro-like patches through which teardrop-like portions of the nucleus are pinched off into the vacuolar lumen and degraded by the PMN process. Also acts as an outer-nuclear membrane receptor for OSH1 and TSC13. This chain is Nucleus-vacuole junction protein 1 (NVJ1), found in Saccharomyces cerevisiae (strain ATCC 204508 / S288c) (Baker's yeast).